The sequence spans 254 residues: Triosephosphate isomerase (254 aa).

12–14 (NWK) lines the substrate pocket. Histidine 99 functions as the Electrophile in the catalytic mechanism. The Proton acceptor role is filled by glutamate 169. Substrate-binding positions include glycine 175, serine 214, and 235 to 236 (GG).

It belongs to the triosephosphate isomerase family. Homodimer.

It is found in the cytoplasm. The enzyme catalyses D-glyceraldehyde 3-phosphate = dihydroxyacetone phosphate. It functions in the pathway carbohydrate biosynthesis; gluconeogenesis. The protein operates within carbohydrate degradation; glycolysis; D-glyceraldehyde 3-phosphate from glycerone phosphate: step 1/1. In terms of biological role, involved in the gluconeogenesis. Catalyzes stereospecifically the conversion of dihydroxyacetone phosphate (DHAP) to D-glyceraldehyde-3-phosphate (G3P). This is Triosephosphate isomerase from Bartonella bacilliformis (strain ATCC 35685 / KC583 / Herrer 020/F12,63).